We begin with the raw amino-acid sequence, 584 residues long: Glycosyltransferase family 92 protein Os08g0121900 (584 aa).

Residues M1–L10 are compositionally biased toward basic and acidic residues. The tract at residues M1 to R33 is disordered. The segment covering K16–G28 has biased composition (gly residues). A helical transmembrane segment spans residues F43–I63. In terms of domain architecture, GT92 spans H314–Y525.

It belongs to the glycosyltransferase 92 family.

It is found in the membrane. The chain is Glycosyltransferase family 92 protein Os08g0121900 from Oryza sativa subsp. japonica (Rice).